We begin with the raw amino-acid sequence, 855 residues long: Suppressor of tumorigenicity 14 protein homolog (855 aa).

At 1 to 55 (MGSNRGRKAGGGSQDFGAGLKYNSRLENMNGFEEGVEFLPANNAKKVEKRGPRRW) the chain is on the cytoplasmic side. Ser13 carries the phosphoserine modification. Residues 56–76 (VVLVAVLFSFLLLSLMAGLLV) traverse the membrane as a helical; Signal-anchor for type II membrane protein segment. At 77-855 (WHFHYRNVRV…RDWIKEHTGV (779 aa)) the chain is on the extracellular side. One can recognise an SEA domain in the interval 86 to 203 (VQKVFNGHLR…TSVVAFPIDP (118 aa)). An N-linked (GlcNAc...) asparagine glycan is attached at Asn107. Cys214 and Cys244 are disulfide-bonded. CUB domains follow at residues 214-331 (CSFA…EATF) and 340-444 (CGGF…LAEY). 2 N-linked (GlcNAc...) asparagine glycosylation sites follow: Asn302 and Asn365. Cystine bridges form between Cys340/Cys366 and Cys397/Cys410. N-linked (GlcNAc...) asparagine glycosylation occurs at Asn421. 4 LDL-receptor class A domains span residues 451–488 (DPCP…YCRC), 489–522 (NATH…DEEG), 523–561 (CSCP…SCDS), and 565–604 (VSCT…NCDC). 13 cysteine pairs are disulfide-bonded: Cys453/Cys464, Cys459/Cys477, Cys471/Cys486, Cys488/Cys501, Cys496/Cys514, Cys508/Cys523, Cys525/Cys537, Cys532/Cys550, Cys544/Cys559, Cys567/Cys579, Cys574/Cys593, Cys587/Cys602, and Cys641/Cys657. A glycan (N-linked (GlcNAc...) asparagine) is linked at Asn489. A Peptidase S1 domain is found at 615–854 (VVGGTNADEG…VRDWIKEHTG (240 aa)). Residues His656 and Asp711 each act as charge relay system in the active site. Asn772 carries an N-linked (GlcNAc...) asparagine glycan. Disulfide bonds link Cys776–Cys790 and Cys801–Cys830. Catalysis depends on Ser805, which acts as the Charge relay system.

Belongs to the peptidase S1 family. Interacts with CDCP1. May interact with TMEFF1. As to expression, highly expressed in intestine, kidney, lung, and thymus. Not expressed in skeletal muscle, liver, heart, testis and brain.

The protein resides in the membrane. It carries out the reaction Cleaves various synthetic substrates with Arg or Lys at the P1 position and prefers small side-chain amino acids, such as Ala and Gly, at the P2 position.. Exhibits trypsin-like activity as defined by cleavage of synthetic substrates with Arg or Lys as the P1 site. Involved in the terminal differentiation of keratinocytes through prostasin (PRSS8) activation and filaggrin (FLG) processing. Proteolytically cleaves and therefore activates TMPRSS13. This is Suppressor of tumorigenicity 14 protein homolog (St14) from Mus musculus (Mouse).